Here is a 256-residue protein sequence, read N- to C-terminus: 4-hydroxy-tetrahydrodipicolinate reductase (256 aa).

NAD(+) contacts are provided by residues 12–17, aspartate 39, 86–88, and 110–113; these read GINGRV, GTT, and AANY. The Proton donor/acceptor role is filled by histidine 144. Histidine 145 serves as a coordination point for (S)-2,3,4,5-tetrahydrodipicolinate. The active-site Proton donor is the lysine 148. 154-155 is a (S)-2,3,4,5-tetrahydrodipicolinate binding site; the sequence is GT.

This sequence belongs to the DapB family.

Its subcellular location is the cytoplasm. It carries out the reaction (S)-2,3,4,5-tetrahydrodipicolinate + NAD(+) + H2O = (2S,4S)-4-hydroxy-2,3,4,5-tetrahydrodipicolinate + NADH + H(+). The enzyme catalyses (S)-2,3,4,5-tetrahydrodipicolinate + NADP(+) + H2O = (2S,4S)-4-hydroxy-2,3,4,5-tetrahydrodipicolinate + NADPH + H(+). The protein operates within amino-acid biosynthesis; L-lysine biosynthesis via DAP pathway; (S)-tetrahydrodipicolinate from L-aspartate: step 4/4. Catalyzes the conversion of 4-hydroxy-tetrahydrodipicolinate (HTPA) to tetrahydrodipicolinate. This Gluconacetobacter diazotrophicus (strain ATCC 49037 / DSM 5601 / CCUG 37298 / CIP 103539 / LMG 7603 / PAl5) protein is 4-hydroxy-tetrahydrodipicolinate reductase.